A 237-amino-acid polypeptide reads, in one-letter code: Proteasome subunit alpha (237 aa).

Belongs to the peptidase T1A family. The 20S proteasome core is composed of 14 alpha and 14 beta subunits that assemble into four stacked heptameric rings, resulting in a barrel-shaped structure. The two inner rings, each composed of seven catalytic beta subunits, are sandwiched by two outer rings, each composed of seven alpha subunits. The catalytic chamber with the active sites is on the inside of the barrel. Has a gated structure, the ends of the cylinder being occluded by the N-termini of the alpha-subunits. Is capped by the proteasome-associated ATPase, ARC.

Its subcellular location is the cytoplasm. Its pathway is protein degradation; proteasomal Pup-dependent pathway. The formation of the proteasomal ATPase ARC-20S proteasome complex, likely via the docking of the C-termini of ARC into the intersubunit pockets in the alpha-rings, may trigger opening of the gate for substrate entry. Interconversion between the open-gate and close-gate conformations leads to a dynamic regulation of the 20S proteasome proteolysis activity. Functionally, component of the proteasome core, a large protease complex with broad specificity involved in protein degradation. The polypeptide is Proteasome subunit alpha (Kineococcus radiotolerans (strain ATCC BAA-149 / DSM 14245 / SRS30216)).